The following is a 525-amino-acid chain: GMP synthase [glutamine-hydrolyzing] (525 aa).

One can recognise a Glutamine amidotransferase type-1 domain in the interval 13 to 202; that stretch reads TILVLDFGSQ…AVDLCHAKQN (190 aa). Residue Cys89 is the Nucleophile of the active site. Catalysis depends on residues His176 and Glu178. The region spanning 203–400 is the GMPS ATP-PPase domain; sequence WTMKNFIGTE…LGISHELVWR (198 aa). 231–237 is a binding site for ATP; it reads SGGVDST. XMP-binding residues include Arg304, Asp462, Lys517, and Glu523.

In terms of assembly, homodimer. Mg(2+) serves as cofactor.

It localises to the cytoplasm. The protein localises to the cytosol. The catalysed reaction is XMP + L-glutamine + ATP + H2O = GMP + L-glutamate + AMP + diphosphate + 2 H(+). It participates in purine metabolism; GMP biosynthesis; GMP from XMP (L-Gln route): step 1/1. Its function is as follows. Catalyzes the conversion of xanthine monophosphate (XMP) to GMP in the presence of glutamine and ATP through an adenyl-XMP intermediate. This Candida glabrata (strain ATCC 2001 / BCRC 20586 / JCM 3761 / NBRC 0622 / NRRL Y-65 / CBS 138) (Yeast) protein is GMP synthase [glutamine-hydrolyzing] (GUA1).